The following is a 714-amino-acid chain: MRKGVLNPDRDRQIVEHELQETGFSPETEKVKNKNFEEDEEEEDESVEKIFESREVPSWKKQLTVRAFVVSFMLSILFSFIVMKLNLTTGIIPSLNVSAGLLGFFFVKTWTKMLHRSGLLKQPFTRQENTVIQTCVVASSGIAFSGGFGTYLFGMSERIATQSGDVSRGVKDPSLGWIIGFLFVVSFLGLFSVVPLRKIMVIDFKLTYPSGTATAHLINSFHTPQGAKLAKKQVRVLGKFFSLSFFWSFFQWFFTGGENCGFSNFPTFGLKAYQYKFYFDFSATYVGVGMICPYIINISVLLGGILSWGIMWPLIETKKGDWFPDNVPSSSMHGLQAYKVFIAVAIILGDGLYNFCKVLSRTLSGLFVQLRGPTTSISRTSFTLEEDPHASPLSPKQSYDDQRRTRFFLKDQIPTWFAVGGYITIAATSTAILPHMFHQLRWYYILVIYICAPVLAFCNAYGAGLTDWSLASTYGKLAIFTIGAWAGSEHGGMLAGLAACGVMMNIVSTASDLTQDFKTGYLTLSSPKSMFVSQVIGTAMGCVVSPCVFWLFYKAFDDLGLPNTEYPAPFATVYRSMAKLGVEGVASLPRECLVLCYAFFGVAILVNIVKDSLHSNWGRFIPLPMAMAIPFFLGPYFAIDMCVGSLILFIWERVDAAKAEAFGTAVASGLICGDGIWSLPSSVLAIAGVNPPVCMKFLSSATNSKVDNFLKGSI.

Residues 17–44 (HELQETGFSPETEKVKNKNFEEDEEEED) are disordered. The span at 27–36 (ETEKVKNKNF) shows a compositional bias: basic and acidic residues. A run of 13 helical transmembrane segments spans residues 67-87 (AFVV…KLNL), 90-110 (GIIP…VKTW), 135-155 (CVVA…LFGM), 175-195 (LGWI…SVVP), 236-256 (VLGK…FFTG), 295-315 (IINI…WPLI), 340-360 (VFIA…KVLS), 413-433 (IPTW…TAIL), 445-465 (ILVI…GAGL), 477-497 (LAIF…LAGL), 531-551 (FVSQ…VFWL), 593-613 (LVLC…KDSL), and 631-651 (FFLG…LFIW).

The protein belongs to the YSL (TC 2.A.67.2) family.

It localises to the membrane. Its function is as follows. May be involved in the transport of nicotianamine-chelated metals. This chain is Probable metal-nicotianamine transporter YSL5 (YSL5), found in Arabidopsis thaliana (Mouse-ear cress).